The following is an 864-amino-acid chain: MHERYVPADVEAAAQSDWRAADAYRSKEDANRKKFYCVSMLPYPSGKLHMGHVRNYTINDVMYRYLRMNGYNTLMPMGWDAFGMPAENAAMANGVPPAQWTYENIAYMKKQMQSMGLAIDWSREVTTCKPDYYKWNQWLFLKMLEKGVAYKKTGTVNWDPVDQTVLANEQVIDGRGWRSGALVEKREIPMYYMRITQYADELLNDLDGLGWPERVKVMQHNWIGKSFGVNFGFPYELDGEKKLLRVFTTRADTIMGVTFCAIAAEHPLAARLARDKPALQAFIDECKRGGVAEADIATMEKKGVATGFSVSHPLTGEPVEVWIGNYVLMSYGEGAVMGVPAHDERDFAFAKKYGLPIRQVIAVEGETYSTDAWQEWYGDKTRAVCVNSGKYDGLAHDAAVDAIAAELKAGGLGDKQITYRLRDWGISRQRYWGTPIPIIHCPSCGDVPVPEQDLPVVLPEDLVPDGTGNPLAKSDAFLNCTCPKCGAAAKRETDTMDTFVDSAWYFSRYAAPDAQTMVDARTDYWMPMDQYIGGIEHAILHLLYSRFWAKVMRDLGLVAFGEPAKNLLTQGMVLNETFYREDAAGKKTWYNPADVTVSFDDKGRPVGAVLKSDGQPVELGGIEKMSKSKNNGVDPQMLIDHYGADTARLFTMFAAPPEQQLEWSGAGVDGASRFLRRVWAFGFANREALAVRAPFDAAQLAEADKTLRREIHGVLKQADFDYQRLQYNTVVSAAMKMLNAIEGAKGATPAVLRETYGVLLRVLYPVVPHVTFELWKALGYADEFGPLLDAPWPKVDEAALEQAEIELVLQVNGKVRGALKVAKDASREAIEAAAVADEMFAKFAEGRPAKKIIVVPGRLVNVVV.

Residues 42-52 (PYPSGKLHMGH) carry the 'HIGH' region motif. The 'KMSKS' region motif lies at 624 to 628 (KMSKS). An ATP-binding site is contributed by Lys-627.

This sequence belongs to the class-I aminoacyl-tRNA synthetase family.

The protein resides in the cytoplasm. The enzyme catalyses tRNA(Leu) + L-leucine + ATP = L-leucyl-tRNA(Leu) + AMP + diphosphate. The protein is Leucine--tRNA ligase of Burkholderia pseudomallei (strain 668).